A 66-amino-acid chain; its full sequence is UPF0337 protein bsl1473 (66 aa).

It belongs to the UPF0337 (CsbD) family.

The sequence is that of UPF0337 protein bsl1473 from Bradyrhizobium diazoefficiens (strain JCM 10833 / BCRC 13528 / IAM 13628 / NBRC 14792 / USDA 110).